Consider the following 692-residue polypeptide: Protein artemis (692 aa).

Thr-380 is modified (phosphothreonine). A Phosphoserine modification is found at Ser-385. 2 disordered regions span residues Arg-503 to Ser-555 and Ser-640 to Glu-660. Positions Phe-507–Lys-520 are enriched in polar residues. The segment covering Thr-530–Ile-543 has biased composition (low complexity). 2 stretches are compositionally biased toward polar residues: residues Thr-544–Ser-555 and Ser-640–Asp-650. At Ser-645 the chain carries Phosphoserine; by ATM.

It belongs to the DNA repair metallo-beta-lactamase (DRMBL) family. In terms of assembly, interacts with LIG4; the interaction is direct. Interacts with ATM. Interacts with BRCA1. Interacts with PRKDC. Interacts with TP53BP1. Also exhibits ATM- and phosphorylation-dependent interaction with the MRN complex, composed of MRE11, RAD50, and NBN. In terms of processing, phosphorylation on undefined residues by PRKDC may stimulate endonucleolytic activity on 5' and 3' hairpins and overhangs. PRKDC must remain present, even after phosphorylation, for efficient hairpin opening. Also phosphorylated by ATM in response to ionizing radiation (IR) and by ATR in response to ultraviolet (UV) radiation.

The protein resides in the nucleus. In terms of biological role, required for V(D)J recombination, the process by which exons encoding the antigen-binding domains of immunoglobulins and T-cell receptor proteins are assembled from individual V, (D), and J gene segments. V(D)J recombination is initiated by the lymphoid specific RAG endonuclease complex, which generates site specific DNA double strand breaks (DSBs). These DSBs present two types of DNA end structures: hairpin sealed coding ends and phosphorylated blunt signal ends. These ends are independently repaired by the non homologous end joining (NHEJ) pathway to form coding and signal joints respectively. This protein exhibits single-strand specific 5'-3' exonuclease activity in isolation, and acquires endonucleolytic activity on 5' and 3' hairpins and overhangs when in a complex with PRKDC. The latter activity is required specifically for the resolution of closed hairpins prior to the formation of the coding joint. May also be required for the repair of complex DSBs induced by ionizing radiation, which require substantial end-processing prior to religation by NHEJ. In Pongo abelii (Sumatran orangutan), this protein is Protein artemis (DCLRE1C).